Reading from the N-terminus, the 831-residue chain is Multiphosphoryl transfer protein (831 aa).

The HPr domain maps to 1 to 90 (MLTIQFLCPL…EYIQVRFIDS (90 aa)). Residue His15 is the Pros-phosphohistidine intermediate; for HPr activity of the active site. The residue at position 15 (His15) is a Phosphohistidine; by EI. The PTS EI stretch occupies residues 119–650 (GNVLASGVGV…AVKSQLRQLD (532 aa)). His298 (tele-phosphohistidine intermediate; for PTS EI activity) is an active-site residue. A Phosphohistidine; by autocatalysis modification is found at His298. Phosphoenolpyruvate contacts are provided by Arg405 and Arg441. Mg(2+) contacts are provided by Glu540 and Asp564. Residues 563 to 564 (ND) and Arg574 contribute to the phosphoenolpyruvate site. Cys611 functions as the Proton donor; for EI activity in the catalytic mechanism. The region spanning 685–828 (PLLALENIFV…QSILTLLETE (144 aa)) is the PTS EIIA type-2 domain. His747 serves as the catalytic Tele-phosphohistidine intermediate; for PTS EIIA activity. A Phosphohistidine; by HPr modification is found at His747.

This sequence belongs to the PEP-utilizing enzyme family. It depends on Mg(2+) as a cofactor.

The protein localises to the cytoplasm. It catalyses the reaction L-histidyl-[protein] + phosphoenolpyruvate = N(pros)-phospho-L-histidyl-[protein] + pyruvate. The catalysed reaction is D-fructose(out) + N(pros)-phospho-L-histidyl-[protein] = D-fructose 1-phosphate(in) + L-histidyl-[protein]. Multifunctional protein that includes general (non sugar-specific) and sugar-specific components of the phosphoenolpyruvate-dependent sugar phosphotransferase system (sugar PTS). This major carbohydrate active transport system catalyzes the phosphorylation of incoming sugar substrates concomitantly with their translocation across the cell membrane. The enzyme II FryABC PTS system is involved in fructose transport. The protein is Multiphosphoryl transfer protein (fryA) of Escherichia coli O6:H1 (strain CFT073 / ATCC 700928 / UPEC).